The primary structure comprises 208 residues: Large ribosomal subunit protein uL4 (208 aa).

The segment at 46–84 (QGTHKAKTRAEVRGGGRKPFRQKGTGNARQGSTRSPLMI) is disordered. The segment covering 69-80 (GTGNARQGSTRS) has biased composition (polar residues).

Belongs to the universal ribosomal protein uL4 family. Part of the 50S ribosomal subunit.

Its function is as follows. One of the primary rRNA binding proteins, this protein initially binds near the 5'-end of the 23S rRNA. It is important during the early stages of 50S assembly. It makes multiple contacts with different domains of the 23S rRNA in the assembled 50S subunit and ribosome. Functionally, forms part of the polypeptide exit tunnel. The chain is Large ribosomal subunit protein uL4 from Chlorobium limicola (strain DSM 245 / NBRC 103803 / 6330).